Here is a 419-residue protein sequence, read N- to C-terminus: Histidine--tRNA ligase (419 aa).

This sequence belongs to the class-II aminoacyl-tRNA synthetase family. As to quaternary structure, homodimer.

It is found in the cytoplasm. It catalyses the reaction tRNA(His) + L-histidine + ATP = L-histidyl-tRNA(His) + AMP + diphosphate + H(+). The chain is Histidine--tRNA ligase from Synechococcus sp. (strain JA-3-3Ab) (Cyanobacteria bacterium Yellowstone A-Prime).